A 63-amino-acid polypeptide reads, in one-letter code: Large ribosomal subunit protein bL32 (63 aa).

A disordered region spans residues 1–23; that stretch reads MATPKAKVSKSRRDKRRAQFTAR. Basic residues predominate over residues 7–18; sequence KVSKSRRDKRRA.

Belongs to the bacterial ribosomal protein bL32 family.

This is Large ribosomal subunit protein bL32 from Chlorobium phaeobacteroides (strain BS1).